Here is a 119-residue protein sequence, read N- to C-terminus: uncharacterized protein (119 aa).

The 112-residue stretch at 1-112 (MVFNMRSTRG…FISSCLLLVL (112 aa)) folds into the ABC transmembrane type-1 domain. Transmembrane regions (helical) follow at residues 51–73 (VLAW…ATRF) and 91–111 (FEIA…LLLV).

It belongs to the binding-protein-dependent transport system permease family. CysTW subfamily.

It localises to the cell membrane. This is an uncharacterized protein from Haemophilus influenzae (strain ATCC 51907 / DSM 11121 / KW20 / Rd).